The following is a 501-amino-acid chain: Aldehyde dehydrogenase mpl4 (501 aa).

231-236 (GSTASG) provides a ligand contact to NAD(+). Residues Glu-253 and Cys-287 contribute to the active site.

This sequence belongs to the aldehyde dehydrogenase family.

It carries out the reaction an aldehyde + NAD(+) + H2O = a carboxylate + NADH + 2 H(+). The protein operates within mycotoxin biosynthesis. Aldehyde dehydrogenase; part of the gene cluster that mediates the biosynthesis of the mycotoxin citrinin, a hepato-nephrotoxic compound to humans due to inhibition of respiration complex III. The pathway begins with the synthesis of a keto-aldehyde intermediate by the citrinin PKS (pksCT) from successive condensations of 4 malonyl-CoA units, presumably with a simple acetyl-CoA starter unit. Release of the keto-aldehyde intermediate is consistent with the presence of the C-terminal reductive release domain. Mp11 collaborates with pksCT by catalyzing the hydrolysis of ACP-bound acyl intermediates to free the ACP from stalled intermediates. Mpl2 then catalyzes the oxidation of the C-12 methyl of the ketone intermediate to an alcohol intermediate which is further oxidized by the oxidoreductase mpl7 to produce a bisaldehyde intermediate. The fourth catalytic step is catalyzed by the mpl4 aldehyde dehydrogenase. The final transformation is the reduction of C-3 by mpl6 to provide the chemically stable citrinin nucleus. This is Aldehyde dehydrogenase mpl4 from Monascus purpureus (Red mold).